We begin with the raw amino-acid sequence, 299 residues long: Acetylglutamate kinase (299 aa).

Substrate-binding positions include 64–65, R86, and N197; that span reads GG.

Belongs to the acetylglutamate kinase family. ArgB subfamily.

It localises to the cytoplasm. The catalysed reaction is N-acetyl-L-glutamate + ATP = N-acetyl-L-glutamyl 5-phosphate + ADP. It participates in amino-acid biosynthesis; L-arginine biosynthesis; N(2)-acetyl-L-ornithine from L-glutamate: step 2/4. Catalyzes the ATP-dependent phosphorylation of N-acetyl-L-glutamate. The sequence is that of Acetylglutamate kinase from Sulfurihydrogenibium sp. (strain YO3AOP1).